Consider the following 343-residue polypeptide: Glyceraldehyde-3-phosphate dehydrogenase (343 aa).

Residues 13 to 14 (TI) and G111 contribute to the NAD(+) site. 140 to 142 (SCN) contributes to the D-glyceraldehyde 3-phosphate binding site. C141 functions as the Nucleophile in the catalytic mechanism. R169 lines the NAD(+) pocket. 195–196 (HA) serves as a coordination point for D-glyceraldehyde 3-phosphate. Q302 provides a ligand contact to NAD(+).

It belongs to the glyceraldehyde-3-phosphate dehydrogenase family. In terms of assembly, homotetramer.

Its subcellular location is the cytoplasm. It carries out the reaction D-glyceraldehyde 3-phosphate + phosphate + NADP(+) = (2R)-3-phospho-glyceroyl phosphate + NADPH + H(+). It catalyses the reaction D-glyceraldehyde 3-phosphate + phosphate + NAD(+) = (2R)-3-phospho-glyceroyl phosphate + NADH + H(+). The protein operates within carbohydrate degradation; glycolysis; pyruvate from D-glyceraldehyde 3-phosphate: step 1/5. The protein is Glyceraldehyde-3-phosphate dehydrogenase of Hyperthermus butylicus (strain DSM 5456 / JCM 9403 / PLM1-5).